The primary structure comprises 658 residues: Interferon-induced GTP-binding protein Mx1 (658 aa).

N-acetylmethionine is present on methionine 1. The tract at residues 1–20 (MVNSKGKITDSDPGSSHLLL) is disordered. Residues 65 to 338 (DLALPAIAVI…LITHICKTLP (274 aa)) enclose the Dynamin-type G domain. The G1 motif stretch occupies residues 75 to 82 (GDQSSGKS). 75–82 (GDQSSGKS) contributes to the GTP binding site. The interval 100–102 (VTR) is G2 motif. A G3 motif region spans residues 176–179 (DLPG). GTP-binding positions include 176-180 (DLPGI) and 245-248 (TKPD). The segment at 245–248 (TKPD) is G4 motif. Residues 277 to 280 (KCRG) are G5 motif. The tract at residues 339–364 (LLEKQIKENYEKITEELQKYGSDVPE) is bundle signaling element (BSE). The tract at residues 364–531 (EEEHEKMFFL…HFQMEQIVYC (168 aa)) is middle domain. Residues 365 to 628 (EEHEKMFFLI…KDTHNWLLKE (264 aa)) form a stalk region. The tract at residues 551-554 (KDKK) is critical for lipid-binding. The GED domain maps to 570–658 (LSDIFEHLLA…ARRRLAKFPG (89 aa)).

This sequence belongs to the TRAFAC class dynamin-like GTPase superfamily. Dynamin/Fzo/YdjA family. As to quaternary structure, homooligomer. Oligomerizes into multimeric filamentous or ring-like structures by virtue of its stalk domain. Oligomerization is critical for GTPase activity, protein stability, and recognition of viral target structures. Interacts with TRPC1, TRPC3, TRPC4, TRPC5, TRPC6 and TRPC7. Interacts with HSPA5. Interacts with TUBB/TUBB5. Interacts with DDX39A and DDX39B. ISGylated.

Its subcellular location is the cytoplasm. The protein resides in the endoplasmic reticulum membrane. It localises to the perinuclear region. In terms of biological role, interferon-induced dynamin-like GTPase with antiviral activity. The sequence is that of Interferon-induced GTP-binding protein Mx1 (MX1) from Otaria byronia (South American sea lion).